Consider the following 218-residue polypeptide: Probable transaldolase (218 aa).

The active-site Schiff-base intermediate with substrate is the Lys-83.

The protein belongs to the transaldolase family. Type 3B subfamily.

The protein resides in the cytoplasm. It carries out the reaction D-sedoheptulose 7-phosphate + D-glyceraldehyde 3-phosphate = D-erythrose 4-phosphate + beta-D-fructose 6-phosphate. It functions in the pathway carbohydrate degradation; pentose phosphate pathway; D-glyceraldehyde 3-phosphate and beta-D-fructose 6-phosphate from D-ribose 5-phosphate and D-xylulose 5-phosphate (non-oxidative stage): step 2/3. Its function is as follows. Transaldolase is important for the balance of metabolites in the pentose-phosphate pathway. In Thermotoga petrophila (strain ATCC BAA-488 / DSM 13995 / JCM 10881 / RKU-1), this protein is Probable transaldolase.